The following is a 288-amino-acid chain: Quinate/shikimate dehydrogenase (288 aa).

The substrate site is built by K71 and D107. NAD(+)-binding positions include 132–135 (AGGA), 155–158 (NRRD), K205, 232–235 (CVYN), and G255.

It belongs to the shikimate dehydrogenase family. Homodimer.

The enzyme catalyses L-quinate + NAD(+) = 3-dehydroquinate + NADH + H(+). The catalysed reaction is L-quinate + NADP(+) = 3-dehydroquinate + NADPH + H(+). It catalyses the reaction shikimate + NADP(+) = 3-dehydroshikimate + NADPH + H(+). It carries out the reaction shikimate + NAD(+) = 3-dehydroshikimate + NADH + H(+). It functions in the pathway metabolic intermediate biosynthesis; chorismate biosynthesis; chorismate from D-erythrose 4-phosphate and phosphoenolpyruvate: step 4/7. The actual biological function of YdiB remains unclear, nor is it known whether 3-dehydroshikimate or quinate represents the natural substrate. Catalyzes the reversible NAD-dependent reduction of both 3-dehydroshikimate (DHSA) and 3-dehydroquinate to yield shikimate (SA) and quinate, respectively. It can use both NAD or NADP for catalysis, however it has higher catalytic efficiency with NAD. The sequence is that of Quinate/shikimate dehydrogenase from Shigella flexneri.